The primary structure comprises 320 residues: Chitinase 3 (320 aa).

Residues 1-18 (MRALALAVVAMAVVAVRG) form the signal peptide. A Chitin-binding type-1 domain is found at 19–59 (EQCGSQAGGALCPNCLCCSQYGWCGSTSDYCGAGCQSQCSG). Disulfide bonds link Cys21–Cys36, Cys30–Cys42, Cys33–Cys61, Cys35–Cys49, Cys53–Cys57, Cys97–Cys159, Cys172–Cys180, and Cys279–Cys311. The active-site Proton donor is the Glu141.

This sequence belongs to the glycosyl hydrolase 19 family. Chitinase class I subfamily. As to expression, expressed at low levels in roots, leaves, sheaths and meristems.

It catalyses the reaction Random endo-hydrolysis of N-acetyl-beta-D-glucosaminide (1-&gt;4)-beta-linkages in chitin and chitodextrins.. In terms of biological role, hydrolyzes chitin and plays a role in defense against fungal pathogens containing chitin. Inhibits the growth of T.reesei fungus on plate assay. This Oryza sativa subsp. japonica (Rice) protein is Chitinase 3 (Cht3).